We begin with the raw amino-acid sequence, 333 residues long: NADH-quinone oxidoreductase subunit H (333 aa).

8 consecutive transmembrane segments (helical) span residues 15–35 (LVIF…FVTY), 88–108 (FILA…TLPF), 117–137 (IGVG…GVVA), 159–179 (ISYE…TGSL), 191–211 (VWYI…AVAE), 250–270 (LFAM…PVMF), 273–293 (FIPG…VLIW), and 313–333 (VLFP…ELFF).

Belongs to the complex I subunit 1 family. As to quaternary structure, NDH-1 is composed of 14 different subunits. Subunits NuoA, H, J, K, L, M, N constitute the membrane sector of the complex.

The protein localises to the cell membrane. It carries out the reaction a quinone + NADH + 5 H(+)(in) = a quinol + NAD(+) + 4 H(+)(out). Its function is as follows. NDH-1 shuttles electrons from NADH, via FMN and iron-sulfur (Fe-S) centers, to quinones in the respiratory chain. The immediate electron acceptor for the enzyme in this species is believed to be ubiquinone. Couples the redox reaction to proton translocation (for every two electrons transferred, four hydrogen ions are translocated across the cytoplasmic membrane), and thus conserves the redox energy in a proton gradient. This subunit may bind ubiquinone. The sequence is that of NADH-quinone oxidoreductase subunit H from Geobacillus sp. (strain WCH70).